Reading from the N-terminus, the 101-residue chain is Small ribosomal subunit protein uS14 (101 aa).

It belongs to the universal ribosomal protein uS14 family. Part of the 30S ribosomal subunit. Contacts proteins S3 and S10.

Binds 16S rRNA, required for the assembly of 30S particles and may also be responsible for determining the conformation of the 16S rRNA at the A site. The polypeptide is Small ribosomal subunit protein uS14 (Pseudomonas syringae pv. tomato (strain ATCC BAA-871 / DC3000)).